The following is a 683-amino-acid chain: Rhophilin-2-A (683 aa).

The 75-residue stretch at 25–99 (KSIAQTGRSK…LERLNISVEV (75 aa)) folds into the REM-1 domain. Positions 110-501 (PLIPLGLKET…TDIFQRLGPL (392 aa)) constitute a BRO1 domain. The PDZ domain maps to 515 to 592 (KICITKEDGD…QSIEIQVISI (78 aa)).

It belongs to the RHPN family. Interacts with RhoA.

It localises to the cytoplasm. The protein localises to the perinuclear region. Its function is as follows. Binds specifically to GTP-Rho. The protein is Rhophilin-2-A (rhpn2-a) of Xenopus laevis (African clawed frog).